A 130-amino-acid chain; its full sequence is Cytochrome c-type biogenesis protein CcmE (130 aa).

The Cytoplasmic portion of the chain corresponds to Met-1–Arg-7. A helical; Signal-anchor for type II membrane protein transmembrane segment spans residues Leu-8–Thr-28. At Leu-29–Lys-130 the chain is on the extracellular side. His-120 and Tyr-124 together coordinate heme.

Belongs to the CcmE/CycJ family.

Its subcellular location is the cell membrane. Its function is as follows. Heme chaperone required for the biogenesis of c-type cytochromes. Transiently binds heme delivered by CcmC and transfers the heme to apo-cytochromes in a process facilitated by CcmF and CcmH. This chain is Cytochrome c-type biogenesis protein CcmE, found in Wolbachia pipientis wMel.